The sequence spans 76 residues: Omega-conotoxin-like TxO2 (76 aa).

A signal peptide spans 1–22 (MKLTCVVIVAVLFLTAWTFVTA). A propeptide spanning residues 23-52 (APHSSNALENLYLKAHHEMNNPEDSELNKR) is cleaved from the precursor. 3 disulfides stabilise this stretch: Cys53/Cys67, Cys60/Cys71, and Cys66/Cys75.

Belongs to the conotoxin O1 superfamily. In terms of tissue distribution, expressed by the venom duct.

It localises to the secreted. In terms of biological role, omega-conotoxins act at presynaptic membranes, they bind and block voltage-gated calcium channels (Cav). This is Omega-conotoxin-like TxO2 from Conus textile (Cloth-of-gold cone).